Here is a 358-residue protein sequence, read N- to C-terminus: Membrane-bound lytic murein transglycosylase C (358 aa).

The first 16 residues, 1–16 (MKKILALLVIAPLLVS), serve as a signal peptide directing secretion. Cys-17 is lipidated: N-palmitoyl cysteine. Cys-17 carries S-diacylglycerol cysteine lipidation.

This sequence belongs to the transglycosylase Slt family.

It is found in the cell outer membrane. It catalyses the reaction Exolytic cleavage of the (1-&gt;4)-beta-glycosidic linkage between N-acetylmuramic acid (MurNAc) and N-acetylglucosamine (GlcNAc) residues in peptidoglycan, from either the reducing or the non-reducing ends of the peptidoglycan chains, with concomitant formation of a 1,6-anhydrobond in the MurNAc residue.. In terms of biological role, murein-degrading enzyme. May play a role in recycling of muropeptides during cell elongation and/or cell division. In Yersinia enterocolitica serotype O:8 / biotype 1B (strain NCTC 13174 / 8081), this protein is Membrane-bound lytic murein transglycosylase C.